The primary structure comprises 104 residues: Glutaredoxin (104 aa).

The Glutaredoxin domain occupies 3 to 103; that stretch reads MIKAQELVSS…PLLTEAGAVK (101 aa). The cysteines at positions 23 and 26 are disulfide-linked.

Belongs to the glutaredoxin family. CPYC subfamily.

It is found in the cytoplasm. Its function is as follows. Has a glutathione-disulfide oxidoreductase activity in the presence of NADPH and glutathione reductase. Reduces low molecular weight disulfides and proteins. The protein is Glutaredoxin of Vernicia fordii (Tung).